A 98-amino-acid polypeptide reads, in one-letter code: MSLVYMNTALAFSISMLGLLMYRAHLMSSLLCLEGMMLSLFTLGAITILTTHFTLANMLPIVLLVFAACEAAVGLSLLVMVSNTYGADFVQNLNLLQC.

3 consecutive transmembrane segments (helical) span residues 1-21 (MSLV…GLLM), 30-50 (LLCL…TILT), and 61-81 (IVLL…LVMV).

It belongs to the complex I subunit 4L family. As to quaternary structure, core subunit of respiratory chain NADH dehydrogenase (Complex I) which is composed of 45 different subunits.

The protein localises to the mitochondrion inner membrane. The catalysed reaction is a ubiquinone + NADH + 5 H(+)(in) = a ubiquinol + NAD(+) + 4 H(+)(out). Functionally, core subunit of the mitochondrial membrane respiratory chain NADH dehydrogenase (Complex I) which catalyzes electron transfer from NADH through the respiratory chain, using ubiquinone as an electron acceptor. Part of the enzyme membrane arm which is embedded in the lipid bilayer and involved in proton translocation. This Crocidura russula (Greater white-toothed shrew) protein is NADH-ubiquinone oxidoreductase chain 4L (MT-ND4L).